We begin with the raw amino-acid sequence, 305 residues long: Glycine--tRNA ligase alpha subunit (305 aa).

Belongs to the class-II aminoacyl-tRNA synthetase family. In terms of assembly, tetramer of two alpha and two beta subunits.

It localises to the cytoplasm. It catalyses the reaction tRNA(Gly) + glycine + ATP = glycyl-tRNA(Gly) + AMP + diphosphate. The polypeptide is Glycine--tRNA ligase alpha subunit (Streptococcus pneumoniae serotype 4 (strain ATCC BAA-334 / TIGR4)).